The primary structure comprises 352 residues: MLELNFSQTLGNHCLTINETLPANGITAIFGVSGAGKTSLINAISGLTRPQKGRIVLNGRVLNDADKGICLTPEKRRVGYVFQDARLFPHYKVRGNLRYGMAKSMVNQFDKLVALLGIEPLLDRLPGSLSGGEKQRVAIGRALLTAPELLLLDEPLASLDIPRKRELLPYLQRLTREINIPMLYVSHSLDEILHLADRVMVLENGQVKAFGALEEVWGSSVMNPWLPKEQQSSILKVTVLEHHPHYAMTALALGDQHLWVNKLEEPLQAALRIRIQASDVSLVLQPPQQTSIRNVLRAKVVNSYDDNGQVEVELEVGGKTLWARISPWARDELAIKPGLWLYAQIKSVSITA.

An ABC transporter domain is found at 1 to 229; it reads MLELNFSQTL…SVMNPWLPKE (229 aa). 31 to 38 is an ATP binding site; sequence GVSGAGKT. Positions 289–352 constitute a Mop domain; the sequence is QTSIRNVLRA…AQIKSVSITA (64 aa).

This sequence belongs to the ABC transporter superfamily. Molybdate importer (TC 3.A.1.8) family. The complex is composed of two ATP-binding proteins (ModC), two transmembrane proteins (ModB) and a solute-binding protein (ModA).

Its subcellular location is the cell inner membrane. It catalyses the reaction molybdate(out) + ATP + H2O = molybdate(in) + ADP + phosphate + H(+). Functionally, part of the ABC transporter complex ModABC involved in molybdenum import. Responsible for energy coupling to the transport system. In Escherichia coli O6:H1 (strain CFT073 / ATCC 700928 / UPEC), this protein is Molybdenum import ATP-binding protein ModC.